We begin with the raw amino-acid sequence, 388 residues long: Probable fatty acid desaturase DES1 (388 aa).

Residues 1 to 33 (MATTPMTVVDHEAEEAVAKAREDDKSRQVDAFD) are disordered. The span at 9-30 (VDHEAEEAVAKAREDDKSRQVD) shows a compositional bias: basic and acidic residues. Transmembrane regions (helical) follow at residues 62 to 82 (LWYVVRDVAAVVALGTAAAAM) and 85 to 105 (WAVWPVYWAVQGTMFWAFFVL). The Histidine box-1 signature appears at 107 to 111 (HDCGH). Residues 119–139 (TLNSVVGHLLHSFILIPYHGW) form a helical membrane-spanning segment. Residues 143–147 (HRTHH) carry the Histidine box-2 motif. The next 3 helical transmembrane spans lie at 177 to 194 (IRFTAPYPLLLFPLYLFY), 226 to 246 (WCIMLASLLAMSCAFGPLQVL), and 248 to 268 (MYGLPYLVFVMWLDLVTYLHH). Positions 310–314 (HVIHH) match the Histidine box-3 motif.

It belongs to the fatty acid desaturase type 1 family. As to expression, highly expressed in root hair cells. Barely detected in panicle, shoot apex, stems and leaves.

Its subcellular location is the membrane. Its pathway is lipid metabolism; polyunsaturated fatty acid biosynthesis. This Sorghum bicolor (Sorghum) protein is Probable fatty acid desaturase DES1.